A 306-amino-acid chain; its full sequence is uncharacterized protein (306 aa).

A coiled-coil region spans residues 13–39 (NMLNEIAANNNLLNNKNNQTNQLNNNQ). Disordered stretches follow at residues 44–76 (YNNQNNNQNYPQNYPQNSQQNFQQNSQQNHQQN), 103–204 (DSKE…QSGQ), and 216–249 (QKQLDKNQPEKIPSKPEKNQKQSHKPKLPPTMQH). Positions 119 to 201 (HQQPIQNNPS…QFAQPNQYNQ (83 aa)) are enriched in low complexity. Basic and acidic residues predominate over residues 218–235 (QLDKNQPEKIPSKPEKNQ). The chain crosses the membrane as a helical span at residues 279 to 299 (LFDYIIIPIALVLVFLFLVHP).

It localises to the membrane. This is an uncharacterized protein from Acanthamoeba polyphaga mimivirus (APMV).